Consider the following 88-residue polypeptide: Small ribosomal subunit protein uS17 (88 aa).

This sequence belongs to the universal ribosomal protein uS17 family. In terms of assembly, part of the 30S ribosomal subunit.

Functionally, one of the primary rRNA binding proteins, it binds specifically to the 5'-end of 16S ribosomal RNA. The polypeptide is Small ribosomal subunit protein uS17 (Oenococcus oeni (strain ATCC BAA-331 / PSU-1)).